A 365-amino-acid chain; its full sequence is Phosphoserine aminotransferase (365 aa).

Arg40 provides a ligand contact to L-glutamate. Pyridoxal 5'-phosphate-binding positions include 74-75 (AS), Phe99, Thr155, Asp177, and Gln200. Position 201 is an N6-(pyridoxal phosphate)lysine (Lys201). 241 to 242 (NT) lines the pyridoxal 5'-phosphate pocket.

This sequence belongs to the class-V pyridoxal-phosphate-dependent aminotransferase family. SerC subfamily. As to quaternary structure, homodimer. The cofactor is pyridoxal 5'-phosphate.

It is found in the cytoplasm. The enzyme catalyses O-phospho-L-serine + 2-oxoglutarate = 3-phosphooxypyruvate + L-glutamate. It catalyses the reaction 4-(phosphooxy)-L-threonine + 2-oxoglutarate = (R)-3-hydroxy-2-oxo-4-phosphooxybutanoate + L-glutamate. Its pathway is amino-acid biosynthesis; L-serine biosynthesis; L-serine from 3-phospho-D-glycerate: step 2/3. Functionally, catalyzes the reversible conversion of 3-phosphohydroxypyruvate to phosphoserine and of 3-hydroxy-2-oxo-4-phosphonooxybutanoate to phosphohydroxythreonine. In Lactococcus lactis subsp. lactis (strain IL1403) (Streptococcus lactis), this protein is Phosphoserine aminotransferase.